Consider the following 156-residue polypeptide: MPRRGAPPKREIPPDPVYGSVLVQQLINKVMKDGKKSKAEKIVYNALSMVEERTGDNPVTVLSQALDNIKPRLEVRSRRVGGATYQVPVEVPPRRANTLALRWLVNFARARREKTMGHRLAGEILDAKDNIGASIRKKEETHRMAEANRAFAHYRW.

This sequence belongs to the universal ribosomal protein uS7 family. In terms of assembly, part of the 30S ribosomal subunit. Contacts proteins S9 and S11.

In terms of biological role, one of the primary rRNA binding proteins, it binds directly to 16S rRNA where it nucleates assembly of the head domain of the 30S subunit. Is located at the subunit interface close to the decoding center, probably blocks exit of the E-site tRNA. The protein is Small ribosomal subunit protein uS7 of Rubrobacter xylanophilus (strain DSM 9941 / JCM 11954 / NBRC 16129 / PRD-1).